The sequence spans 115 residues: Large ribosomal subunit protein uL24 (115 aa).

It belongs to the universal ribosomal protein uL24 family. In terms of assembly, part of the 50S ribosomal subunit.

One of two assembly initiator proteins, it binds directly to the 5'-end of the 23S rRNA, where it nucleates assembly of the 50S subunit. In terms of biological role, one of the proteins that surrounds the polypeptide exit tunnel on the outside of the subunit. In Amoebophilus asiaticus (strain 5a2), this protein is Large ribosomal subunit protein uL24.